A 2020-amino-acid chain; its full sequence is Metacaspase-2 (2020 aa).

Composition is skewed to basic and acidic residues over residues 51–60 and 69–78; these read SENDRNESIQ and DNRKTNKSEK. Disordered stretches follow at residues 51–78 and 573–614; these read SEND…KSEK and RNGN…NINN. The segment covering 576-614 has biased composition (low complexity); the sequence is NINNNKNNNINNNNNNINNNNNNINNNNNNINNNNNINN.

The protein belongs to the peptidase C14B family.

It is found in the cytoplasm. Its activity is regulated as follows. Ca(2+) does not appear to affect catalytic activity. Protease that cleaves specifically after arginine or lysine residues. May play a role in parasite growth and/or development. This chain is Metacaspase-2, found in Plasmodium falciparum (isolate 3D7).